The sequence spans 161 residues: uncharacterized protein (161 aa).

This is an uncharacterized protein from Methanocaldococcus jannaschii (strain ATCC 43067 / DSM 2661 / JAL-1 / JCM 10045 / NBRC 100440) (Methanococcus jannaschii).